The sequence spans 211 residues: Pyridoxine/pyridoxamine 5'-phosphate oxidase (211 aa).

Substrate is bound by residues 7–10 (RREY) and lysine 65. Residues 60–65 (RIVLLK), 75–76 (YT), arginine 81, lysine 82, and glutamine 104 contribute to the FMN site. Substrate is bound by residues tyrosine 122, arginine 126, and serine 130. Residues 139-140 (QS) and tryptophan 184 each bind FMN. 190–192 (RLH) contacts substrate. FMN is bound at residue arginine 194.

It belongs to the pyridoxamine 5'-phosphate oxidase family. Homodimer. FMN is required as a cofactor.

The catalysed reaction is pyridoxamine 5'-phosphate + O2 + H2O = pyridoxal 5'-phosphate + H2O2 + NH4(+). The enzyme catalyses pyridoxine 5'-phosphate + O2 = pyridoxal 5'-phosphate + H2O2. Its pathway is cofactor metabolism; pyridoxal 5'-phosphate salvage; pyridoxal 5'-phosphate from pyridoxamine 5'-phosphate: step 1/1. It participates in cofactor metabolism; pyridoxal 5'-phosphate salvage; pyridoxal 5'-phosphate from pyridoxine 5'-phosphate: step 1/1. Functionally, catalyzes the oxidation of either pyridoxine 5'-phosphate (PNP) or pyridoxamine 5'-phosphate (PMP) into pyridoxal 5'-phosphate (PLP). This is Pyridoxine/pyridoxamine 5'-phosphate oxidase from Vibrio vulnificus (strain CMCP6).